The chain runs to 48 residues: uncharacterized protein (48 aa).

This sequence belongs to the ELIP/psbS family.

The protein localises to the plastid. It localises to the chloroplast. Functionally, possible role in chlorophyll and/or carotenoid binding. This is an uncharacterized protein from Pyropia yezoensis (Susabi-nori).